The sequence spans 240 residues: MRHYGVALRRDAGLFGYERALNRHGLGPVAGVDEAGRGACAGPLVIAAVILAPEARQRLARLADSKLLTEQIRESVFEDVMAAAAAWSTVVISAAEIDRVGLHVANITGMRRAVARLSARPGYVLTDGFAVAGFGVESLAVVKGDRVVACVAAASVVAKVTRDRIMRALHTRYAEYDFAQHKGYVTAAHAAALARCGPCDEHRMSYVNVAAHAATTREARSLRLEDRVLVTSRHGVTETV.

The region spanning 27–226 is the RNase H type-2 domain; the sequence is GPVAGVDEAG…REARSLRLED (200 aa). Residues Asp33, Glu34, and Asp127 each coordinate a divalent metal cation.

The protein belongs to the RNase HII family. Requires Mn(2+) as cofactor. Mg(2+) is required as a cofactor.

It is found in the cytoplasm. It carries out the reaction Endonucleolytic cleavage to 5'-phosphomonoester.. Functionally, endonuclease that specifically degrades the RNA of RNA-DNA hybrids. The chain is Ribonuclease HII from Frankia casuarinae (strain DSM 45818 / CECT 9043 / HFP020203 / CcI3).